The primary structure comprises 525 residues: MEINDFDKLGIKDVKKVYYNPDYETLFQKELEQQEGVETTLGAVAVDTGIFTGRSPKDKYFVKQPPSEKYIAWGDINQPISKEIFDELFEKTKEYLSGKELYVMDAFAGASDDSKKAIRVVTEIAWQAHFVKNMFIRPTEEELQNFHPDFTLYVAANLKNDRYKEHGLNSDVFIIFNIEENIAIIGGTWYGGEIKKGIFSMMNYWLPLEGKLSMHCSANIGDKDDVALFFGLSGTGKTTLSADPNRRLIGDDEHGWDDNGVFNFEGGCYAKVIGLDPEKEPDIYAAIKRDALLENVVVKENGEVDFEDSSKTENTRVSYPIYHICKHKEDLQGPHPKNIIFLSADAFGVLPPVSKLTKEQAMYYFLSGYTAKVAGTERGITEPVATFSACFGEAFLPLHPTVYAKLLGEKIDKHGVNVYLVNTGWTGGPYGIGQRMSLPATRSCINAILNGSITQSEYEILPIFNLEIPTYVEGVDPAILNPRNTWEDKEAYDRQLEHLAKLFIDNFKRYEGYGNFDYSKAGPQL.

Substrate-binding residues include R54, Y190, and K196. ATP is bound by residues K196, H215, and 231–239 (GLSGTGKTT). Mn(2+)-binding residues include K196 and H215. Mn(2+) is bound at residue D252. ATP is bound by residues E280, R316, and T441. Residue R316 coordinates substrate.

The protein belongs to the phosphoenolpyruvate carboxykinase (ATP) family. It depends on Mn(2+) as a cofactor.

The protein resides in the cytoplasm. The catalysed reaction is oxaloacetate + ATP = phosphoenolpyruvate + ADP + CO2. It functions in the pathway carbohydrate biosynthesis; gluconeogenesis. In terms of biological role, involved in the gluconeogenesis. Catalyzes the conversion of oxaloacetate (OAA) to phosphoenolpyruvate (PEP) through direct phosphoryl transfer between the nucleoside triphosphate and OAA. This chain is Phosphoenolpyruvate carboxykinase (ATP), found in Nitratiruptor sp. (strain SB155-2).